A 365-amino-acid chain; its full sequence is Bifunctional chorismate mutase/prephenate dehydratase (365 aa).

The Chorismate mutase domain occupies 1–96 (MADQDQLKAL…SCLALEQPLK (96 aa)). Residues Arg11, Arg28, Lys39, and Glu57 each contribute to the substrate site. The 176-residue stretch at 97–272 (VAYLGPEGTF…NSTRFLIIGN (176 aa)) folds into the Prephenate dehydratase domain. Residues 284-361 (SIIVSMRNKP…VALKVLGSYP (78 aa)) form the ACT domain.

Its subcellular location is the cytoplasm. It catalyses the reaction chorismate = prephenate. It carries out the reaction prephenate + H(+) = 3-phenylpyruvate + CO2 + H2O. It participates in amino-acid biosynthesis; L-phenylalanine biosynthesis; phenylpyruvate from prephenate: step 1/1. The protein operates within metabolic intermediate biosynthesis; prephenate biosynthesis; prephenate from chorismate: step 1/1. In terms of biological role, catalyzes the Claisen rearrangement of chorismate to prephenate and the decarboxylation/dehydration of prephenate to phenylpyruvate. This chain is Bifunctional chorismate mutase/prephenate dehydratase (pheA), found in Pseudomonas aeruginosa (strain ATCC 15692 / DSM 22644 / CIP 104116 / JCM 14847 / LMG 12228 / 1C / PRS 101 / PAO1).